Consider the following 329-residue polypeptide: N-acetylmuramoyl-L-alanine amidase sle1 (329 aa).

A signal peptide spans 1–26 (MNKKILATAVLGTGALSTLFAHQAEA). LysM domains are found at residues 28-71 (TTHT…VLKV), 88-131 (STYT…QLKV), and 152-195 (STYT…KLRV). In terms of domain architecture, Peptidase C51 spans 205–329 (STRSAQSTYY…YQVRNYKFIH (125 aa)).

Its subcellular location is the secreted. It is found in the cell surface. The enzyme catalyses Hydrolyzes the link between N-acetylmuramoyl residues and L-amino acid residues in certain cell-wall glycopeptides.. In terms of biological role, peptidoglycan hydrolase involved in the splitting of the septum during cell division. The polypeptide is N-acetylmuramoyl-L-alanine amidase sle1 (sle1) (Staphylococcus haemolyticus (strain JCSC1435)).